A 210-amino-acid chain; its full sequence is LexA repressor (210 aa).

Residues 28-48 (FEEIAEGMGLSSLATVHKHIG) constitute a DNA-binding region (H-T-H motif). Catalysis depends on for autocatalytic cleavage activity residues S131 and K169.

The protein belongs to the peptidase S24 family. Homodimer.

It catalyses the reaction Hydrolysis of Ala-|-Gly bond in repressor LexA.. Functionally, represses a number of genes involved in the response to DNA damage (SOS response), including recA and lexA. In the presence of single-stranded DNA, RecA interacts with LexA causing an autocatalytic cleavage which disrupts the DNA-binding part of LexA, leading to derepression of the SOS regulon and eventually DNA repair. The polypeptide is LexA repressor (Koribacter versatilis (strain Ellin345)).